Consider the following 94-residue polypeptide: Evasin P1172 (94 aa).

3 cysteine pairs are disulfide-bonded: Cys-35–Cys-54, Cys-39–Cys-56, and Cys-50–Cys-67. N-linked (GlcNAc...) asparagine glycans are attached at residues Asn-38, Asn-44, Asn-53, and Asn-80.

It localises to the secreted. Its function is as follows. Salivary chemokine-binding protein which binds to host chemokines CXCL1, CXCL2, CXCL5 and CXCL8. The sequence is that of Evasin P1172 from Ixodes ricinus (Common tick).